The chain runs to 354 residues: Uroporphyrinogen decarboxylase (354 aa).

Residues 27-31, Asp77, Tyr153, Thr208, and His326 contribute to the substrate site; that span reads RQAGR.

Belongs to the uroporphyrinogen decarboxylase family. In terms of assembly, homodimer.

Its subcellular location is the cytoplasm. The catalysed reaction is uroporphyrinogen III + 4 H(+) = coproporphyrinogen III + 4 CO2. It participates in porphyrin-containing compound metabolism; protoporphyrin-IX biosynthesis; coproporphyrinogen-III from 5-aminolevulinate: step 4/4. Catalyzes the decarboxylation of four acetate groups of uroporphyrinogen-III to yield coproporphyrinogen-III. This is Uroporphyrinogen decarboxylase from Neisseria meningitidis serogroup C (strain 053442).